A 159-amino-acid polypeptide reads, in one-letter code: Neuroglobin-2 (159 aa).

The Globin domain maps to 3-151; sequence KLTEKDKELI…VVAAMSRGWA (149 aa). Residues H66 and H98 each contribute to the heme b site.

Belongs to the globin family. In terms of assembly, monomer. Homodimers and homotetramers. Mainly monomeric but also detected as part of homodimers and homotetramers.

It localises to the cytoplasm. The protein localises to the cytosol. The protein resides in the mitochondrion matrix. The enzyme catalyses Fe(III)-heme b-[protein] + nitric oxide + H2O = Fe(II)-heme b-[protein] + nitrite + 2 H(+). Its function is as follows. Monomeric globin with a bis-histidyl six-coordinate heme-iron atom through which it can bind dioxygen, carbon monoxide and nitric oxide. Could help transport oxygen and increase its availability to the metabolically active neuronal tissues, though its low quantity in tissues as well as its high affinity for dioxygen, which may limit its oxygen-releasing ability, argue against it. The ferrous/deoxygenated form exhibits a nitrite reductase activity and it could produce nitric oxide which in turn inhibits cellular respiration in response to hypoxia. In its ferrous/deoxygenated state, it may also exhibit GDI (Guanine nucleotide Dissociation Inhibitor) activity toward heterotrimeric G-alpha proteins, thereby regulating signal transduction to facilitate neuroprotective responses in the wake of hypoxia and associated oxidative stress. This chain is Neuroglobin-2 (ngb2), found in Oncorhynchus mykiss (Rainbow trout).